A 487-amino-acid chain; its full sequence is Glutamyl-tRNA(Gln) amidotransferase subunit A (487 aa).

The active-site Charge relay system is the K78. Residues 135–144 (SAYQTTTNPW) show a composition bias toward polar residues. Residues 135–155 (SAYQTTTNPWDASRVPGGSSG) form a disordered region. The Charge relay system role is filled by S153. The Acyl-ester intermediate role is filled by S177.

It belongs to the amidase family. GatA subfamily. Heterotrimer of A, B and C subunits.

The catalysed reaction is L-glutamyl-tRNA(Gln) + L-glutamine + ATP + H2O = L-glutaminyl-tRNA(Gln) + L-glutamate + ADP + phosphate + H(+). In terms of biological role, allows the formation of correctly charged Gln-tRNA(Gln) through the transamidation of misacylated Glu-tRNA(Gln) in organisms which lack glutaminyl-tRNA synthetase. The reaction takes place in the presence of glutamine and ATP through an activated gamma-phospho-Glu-tRNA(Gln). The chain is Glutamyl-tRNA(Gln) amidotransferase subunit A from Maridesulfovibrio salexigens (strain ATCC 14822 / DSM 2638 / NCIMB 8403 / VKM B-1763) (Desulfovibrio salexigens).